Here is a 592-residue protein sequence, read N- to C-terminus: Arginine--tRNA ligase (592 aa).

Positions 134-144 (ANPTGPLHVGH) match the 'HIGH' region motif.

It belongs to the class-I aminoacyl-tRNA synthetase family. In terms of assembly, monomer.

Its subcellular location is the cytoplasm. It catalyses the reaction tRNA(Arg) + L-arginine + ATP = L-arginyl-tRNA(Arg) + AMP + diphosphate. This Coxiella burnetii (strain CbuK_Q154) (Coxiella burnetii (strain Q154)) protein is Arginine--tRNA ligase.